The primary structure comprises 745 residues: Isocitrate dehydrogenase [NADP] 2 (745 aa).

Residues N87 and S89 each coordinate NADP(+). Residues S134, N137, R141, R147, and K257 each contribute to the D-threo-isocitrate site. D352 contributes to the Mg(2+) binding site. Y422 and R550 together coordinate D-threo-isocitrate. Mg(2+) is bound by residues D551 and D555. G587, S588, A589, H592, R603, D605, and R652 together coordinate NADP(+).

The protein belongs to the monomeric-type IDH family. In terms of assembly, may form homotrimers. Also forms homotetramers at low salt concentration, which are dissociated into homodimers, but not into monomers, at high salt concentration (1 M). Mg(2+) is required as a cofactor.

It carries out the reaction D-threo-isocitrate + NADP(+) = 2-oxoglutarate + CO2 + NADPH. Functionally, catalyzes the oxidative decarboxylation of isocitrate to 2-oxoglutarate and carbon dioxide with the concomitant reduction of NADP(+). Cannot use NAD(+). This chain is Isocitrate dehydrogenase [NADP] 2, found in Mycobacterium tuberculosis (strain ATCC 25618 / H37Rv).